A 170-amino-acid chain; its full sequence is Vimentin A1 (170 aa).

Residues 1 to 10 (DLTEAANKSN) show a composition bias toward polar residues. The interval 1–20 (DLTEAANKSNEALRLAKQES) is disordered. Positions 1-111 (DLTEAANKSN…ATYRKLLEGE (111 aa)) are coil 2. Residues 1–115 (DLTEAANKSN…KLLEGEESRI (115 aa)) enclose the IF rod domain. The interval 112–170 (ESRISTPLPNFSSFNLRETMLELKPNIESTFTKKVLIKTIETRDGQVLNESTQNHDDLE) is tail.

It belongs to the intermediate filament family. As to quaternary structure, homomer. Post-translationally, one of the most prominent phosphoproteins in various cells of mesenchymal origin. Phosphorylation is enhanced during cell division, at which time vimentin filaments are significantly reorganized. As to expression, expressed in low amounts in retina, optic nerve, and brain and in higher amounts in spinal cord.

Vimentins are class-III intermediate filaments found in various non-epithelial cells, especially mesenchymal cells. Vimentin is attached to the nucleus, endoplasmic reticulum, and mitochondria, either laterally or terminally. This chain is Vimentin A1, found in Carassius auratus (Goldfish).